Here is a 197-residue protein sequence, read N- to C-terminus: Small ribosomal subunit protein eS1 (197 aa).

It belongs to the eukaryotic ribosomal protein eS1 family.

In Sulfolobus acidocaldarius (strain ATCC 33909 / DSM 639 / JCM 8929 / NBRC 15157 / NCIMB 11770), this protein is Small ribosomal subunit protein eS1.